A 48-amino-acid chain; its full sequence is ATP synthase protein 8 (48 aa).

The helical transmembrane segment at 12 to 32 (LLTFGMLAISMLLYLVSTIIL) threads the bilayer.

The protein belongs to the ATPase protein 8 family. F-type ATPases have 2 components, CF(1) - the catalytic core - and CF(0) - the membrane proton channel.

It is found in the mitochondrion membrane. Its function is as follows. Mitochondrial membrane ATP synthase (F(1)F(0) ATP synthase or Complex V) produces ATP from ADP in the presence of a proton gradient across the membrane which is generated by electron transport complexes of the respiratory chain. F-type ATPases consist of two structural domains, F(1) - containing the extramembraneous catalytic core and F(0) - containing the membrane proton channel, linked together by a central stalk and a peripheral stalk. During catalysis, ATP synthesis in the catalytic domain of F(1) is coupled via a rotary mechanism of the central stalk subunits to proton translocation. Part of the complex F(0) domain. Minor subunit located with subunit a in the membrane. The sequence is that of ATP synthase protein 8 (ATP8) from Debaryomyces hansenii (strain ATCC 36239 / CBS 767 / BCRC 21394 / JCM 1990 / NBRC 0083 / IGC 2968) (Yeast).